The primary structure comprises 417 residues: Gamma-glutamyl phosphate reductase (417 aa).

The protein belongs to the gamma-glutamyl phosphate reductase family.

It localises to the cytoplasm. The catalysed reaction is L-glutamate 5-semialdehyde + phosphate + NADP(+) = L-glutamyl 5-phosphate + NADPH + H(+). It functions in the pathway amino-acid biosynthesis; L-proline biosynthesis; L-glutamate 5-semialdehyde from L-glutamate: step 2/2. In terms of biological role, catalyzes the NADPH-dependent reduction of L-glutamate 5-phosphate into L-glutamate 5-semialdehyde and phosphate. The product spontaneously undergoes cyclization to form 1-pyrroline-5-carboxylate. In Photorhabdus laumondii subsp. laumondii (strain DSM 15139 / CIP 105565 / TT01) (Photorhabdus luminescens subsp. laumondii), this protein is Gamma-glutamyl phosphate reductase.